The sequence spans 429 residues: Choline kinase A2 (429 aa).

Residues 82 to 88, Arg111, 152 to 158, and Gln257 contribute to the ATP site; these read KGGMSNM and EYIPSRP. 84-86 serves as a coordination point for substrate; the sequence is GMS. Residue Glu258 participates in Ca(2+) binding. Asp301 contributes to the ATP binding site. Residues Glu320 and Ile323 each coordinate Ca(2+).

It belongs to the choline/ethanolamine kinase family. Homodimer. A small proportion exists as higher oligomers. Mg(2+) serves as cofactor.

It catalyses the reaction choline + ATP = phosphocholine + ADP + H(+). The catalysed reaction is ethanolamine + ATP = phosphoethanolamine + ADP + H(+). It participates in phospholipid metabolism; phosphatidylcholine biosynthesis; phosphocholine from choline: step 1/1. The protein operates within phospholipid metabolism; phosphatidylethanolamine biosynthesis; phosphatidylethanolamine from ethanolamine: step 1/3. With respect to regulation, inhibited by Ca(2+). Mild inhibition by high levels of Mg(2+)(&gt;10 mM). In terms of biological role, catalyzes the first step in phosphatidylcholine biosynthesis. May contribute to phosphatidylethanolamine biosynthesis. Phosphorylates choline and ethanolamine but the activity is much higher with choline. This Caenorhabditis elegans protein is Choline kinase A2.